Here is an 81-residue protein sequence, read N- to C-terminus: Small ribosomal subunit protein bS16 (81 aa).

This sequence belongs to the bacterial ribosomal protein bS16 family.

This Acetivibrio thermocellus (strain ATCC 27405 / DSM 1237 / JCM 9322 / NBRC 103400 / NCIMB 10682 / NRRL B-4536 / VPI 7372) (Clostridium thermocellum) protein is Small ribosomal subunit protein bS16.